The following is a 185-amino-acid chain: Elongation factor P (185 aa).

It belongs to the elongation factor P family.

It is found in the cytoplasm. It functions in the pathway protein biosynthesis; polypeptide chain elongation. In terms of biological role, involved in peptide bond synthesis. Stimulates efficient translation and peptide-bond synthesis on native or reconstituted 70S ribosomes in vitro. Probably functions indirectly by altering the affinity of the ribosome for aminoacyl-tRNA, thus increasing their reactivity as acceptors for peptidyl transferase. This chain is Elongation factor P, found in Staphylococcus carnosus (strain TM300).